The following is a 239-amino-acid chain: Small ribosomal subunit protein uS2 (239 aa).

Belongs to the universal ribosomal protein uS2 family.

This Prochlorococcus marinus (strain MIT 9303) protein is Small ribosomal subunit protein uS2.